Here is a 309-residue protein sequence, read N- to C-terminus: DDRGK domain-containing protein 1 (309 aa).

The Lumenal segment spans residues 1–2 (MD). The helical transmembrane segment at 3–23 (LIILVGIASALLVVILTIFFL) threads the bilayer. The Cytoplasmic segment spans residues 24 to 309 (QKKKGGTEAK…VSAGAGEGSS (286 aa)). The disordered stretch occupies residues 30–178 (TEAKEAAAPP…RLVKEERERK (149 aa)). A compositionally biased stretch (low complexity) spans 53–84 (RRAQIARNQRNRLRQNAPAAAPAAAAALQAAD). Residues 85-95 (AEGDNDDENPD) are compositionally biased toward acidic residues. Residues 107–178 (LDEKMGAKKR…RLVKEERERK (72 aa)) are compositionally biased toward basic and acidic residues.

The protein belongs to the DDRGK1 family. In terms of assembly, interacts with Atg9; the interaction is transient.

Its subcellular location is the endoplasmic reticulum membrane. Functionally, substrate adapter for ufmylation, the covalent attachment of the ubiquitin-like modifier UFM1 to substrate proteins. Required for ufmylation of Atg9; protects the nervous system during aging, possibly by stabilizing Atg9 and supporting its function. The chain is DDRGK domain-containing protein 1 from Drosophila persimilis (Fruit fly).